The following is a 157-amino-acid chain: Transcription elongation factor GreB (157 aa).

It belongs to the GreA/GreB family. GreB subfamily.

Necessary for efficient RNA polymerase transcription elongation past template-encoded arresting sites. The arresting sites in DNA have the property of trapping a certain fraction of elongating RNA polymerases that pass through, resulting in locked ternary complexes. Cleavage of the nascent transcript by cleavage factors such as GreA or GreB allows the resumption of elongation from the new 3'terminus. GreB releases sequences of up to 9 nucleotides in length. The sequence is that of Transcription elongation factor GreB from Salmonella typhi.